The following is a 291-amino-acid chain: ATP synthase gamma chain (291 aa).

It belongs to the ATPase gamma chain family. As to quaternary structure, F-type ATPases have 2 components, CF(1) - the catalytic core - and CF(0) - the membrane proton channel. CF(1) has five subunits: alpha(3), beta(3), gamma(1), delta(1), epsilon(1). CF(0) has three main subunits: a, b and c.

Its subcellular location is the cell inner membrane. Functionally, produces ATP from ADP in the presence of a proton gradient across the membrane. The gamma chain is believed to be important in regulating ATPase activity and the flow of protons through the CF(0) complex. The protein is ATP synthase gamma chain of Neisseria gonorrhoeae (strain NCCP11945).